The sequence spans 371 residues: MYNESPIIRRPSTRIYVGNVPIGDGAPIAVQSMTNTKTTDVAATVAQIRALEKVGADIVRVSVPTMDDAEAFKIIKQSVNVPLVADIHFDYRIALKVAEYGADCLRINPGNIGNEERIRSVVECARDKNIPIRIGVNGGSLEKDLMDKYREPTPEALFESAMRHVDILDRLNFDQFKVSVKASDVFLAVASYRLLAKQIRQPLHLGITEAGGMRAGSVKSAVGLGMLLAEGIGDTLRISLAADPVEEIKVGFDILKSLRIRSRGINFIACPSCSRQEFDVISTVNELERRLEDITTAMDVSIIGCVVNGPGEALVSDIGLTGGHAKSGYYDDGVRQKERFDNNKIIDGLEAKIRAKASMMANRIAITDKTE.

The [4Fe-4S] cluster site is built by cysteine 270, cysteine 273, cysteine 305, and glutamate 312.

The protein belongs to the IspG family. [4Fe-4S] cluster is required as a cofactor.

It catalyses the reaction (2E)-4-hydroxy-3-methylbut-2-enyl diphosphate + oxidized [flavodoxin] + H2O + 2 H(+) = 2-C-methyl-D-erythritol 2,4-cyclic diphosphate + reduced [flavodoxin]. It participates in isoprenoid biosynthesis; isopentenyl diphosphate biosynthesis via DXP pathway; isopentenyl diphosphate from 1-deoxy-D-xylulose 5-phosphate: step 5/6. Functionally, converts 2C-methyl-D-erythritol 2,4-cyclodiphosphate (ME-2,4cPP) into 1-hydroxy-2-methyl-2-(E)-butenyl 4-diphosphate. In Shewanella frigidimarina (strain NCIMB 400), this protein is 4-hydroxy-3-methylbut-2-en-1-yl diphosphate synthase (flavodoxin).